The primary structure comprises 344 residues: uncharacterized protein (344 aa).

Belongs to the MG414/MG415 family.

This is an uncharacterized protein from Mycoplasma pneumoniae (strain ATCC 29342 / M129 / Subtype 1) (Mycoplasmoides pneumoniae).